We begin with the raw amino-acid sequence, 38 residues long: Photosystem I reaction center subunit IX (38 aa).

The helical transmembrane segment at 6-26 threads the bilayer; it reads YLSTAPVVATLWLFLTAGILI.

The protein belongs to the PsaJ family.

The protein localises to the plastid. It is found in the chloroplast thylakoid membrane. Functionally, may help in the organization of the PsaE and PsaF subunits. The sequence is that of Photosystem I reaction center subunit IX from Cyanidioschyzon merolae (strain NIES-3377 / 10D) (Unicellular red alga).